A 459-amino-acid chain; its full sequence is MSNFAIILAAGKGTRMKSDLPKVLHKVAGISMLEHVFRSVGAIQPEKTVTVVGHKAELVEEVLAEQTEFVTQSEQLGTGHAVMMTEPILEGLSGHTLVIAGDTPLITGESLKNLIDFHINHKNVATILTAETDNPFGYGRIVRNDNAEVLRIVEQKDATDFEKQIKEINTGTYVFDNERLFEALKNINTNNAQGEYYITDVIGIFRETGEKVGAYTLKDFDESLGVNDRVALATAESVMRRRINHKHMVNGVSFVNPEATYIDIDVEIAPEVQIEANVILKGQTKIGAETVLTNGTYVVDSTIGAGAVITNSMIEESSVADGVTVGPYAHIRPNSSLGAQVHIGNFVEVKGSSIGENTKAGHLTYIGNCEVGSNVNFGAGTITVNYDGKNKYKTVIGDNVFVGSNSTIIAPVELGDNSLVGAGSTITKDVPADAIAIGRGRQINKDEYATRLPHHPKNQ.

The segment at 1–229 (MSNFAIILAA…FDESLGVNDR (229 aa)) is pyrophosphorylase. UDP-N-acetyl-alpha-D-glucosamine-binding positions include 8–11 (LAAG), lysine 22, glutamine 72, and 77–78 (GT). Aspartate 102 is a binding site for Mg(2+). Residues glycine 139, glutamate 154, asparagine 169, and asparagine 227 each coordinate UDP-N-acetyl-alpha-D-glucosamine. Position 227 (asparagine 227) interacts with Mg(2+). The interval 230-250 (VALATAESVMRRRINHKHMVN) is linker. An N-acetyltransferase region spans residues 251-459 (GVSFVNPEAT…TRLPHHPKNQ (209 aa)). Positions 332 and 350 each coordinate UDP-N-acetyl-alpha-D-glucosamine. Histidine 362 acts as the Proton acceptor in catalysis. Positions 365 and 376 each coordinate UDP-N-acetyl-alpha-D-glucosamine. Residues alanine 379, 385–386 (NY), serine 404, alanine 422, and arginine 439 each bind acetyl-CoA.

This sequence in the N-terminal section; belongs to the N-acetylglucosamine-1-phosphate uridyltransferase family. The protein in the C-terminal section; belongs to the transferase hexapeptide repeat family. Homotrimer. Requires Mg(2+) as cofactor.

It is found in the cytoplasm. The enzyme catalyses alpha-D-glucosamine 1-phosphate + acetyl-CoA = N-acetyl-alpha-D-glucosamine 1-phosphate + CoA + H(+). It carries out the reaction N-acetyl-alpha-D-glucosamine 1-phosphate + UTP + H(+) = UDP-N-acetyl-alpha-D-glucosamine + diphosphate. The protein operates within nucleotide-sugar biosynthesis; UDP-N-acetyl-alpha-D-glucosamine biosynthesis; N-acetyl-alpha-D-glucosamine 1-phosphate from alpha-D-glucosamine 6-phosphate (route II): step 2/2. Its pathway is nucleotide-sugar biosynthesis; UDP-N-acetyl-alpha-D-glucosamine biosynthesis; UDP-N-acetyl-alpha-D-glucosamine from N-acetyl-alpha-D-glucosamine 1-phosphate: step 1/1. It participates in bacterial outer membrane biogenesis; LPS lipid A biosynthesis. Functionally, catalyzes the last two sequential reactions in the de novo biosynthetic pathway for UDP-N-acetylglucosamine (UDP-GlcNAc). The C-terminal domain catalyzes the transfer of acetyl group from acetyl coenzyme A to glucosamine-1-phosphate (GlcN-1-P) to produce N-acetylglucosamine-1-phosphate (GlcNAc-1-P), which is converted into UDP-GlcNAc by the transfer of uridine 5-monophosphate (from uridine 5-triphosphate), a reaction catalyzed by the N-terminal domain. This chain is Bifunctional protein GlmU, found in Streptococcus pneumoniae serotype 2 (strain D39 / NCTC 7466).